The primary structure comprises 78 residues: Acyl carrier protein (78 aa).

Residues 4–78 (AEIKDKVYDI…QQAIDYIVKK (75 aa)) form the Carrier domain. O-(pantetheine 4'-phosphoryl)serine is present on Ser-39.

The protein belongs to the acyl carrier protein (ACP) family. In terms of processing, 4'-phosphopantetheine is transferred from CoA to a specific serine of apo-ACP by AcpS. This modification is essential for activity because fatty acids are bound in thioester linkage to the sulfhydryl of the prosthetic group.

Its subcellular location is the cytoplasm. It participates in lipid metabolism; fatty acid biosynthesis. Its function is as follows. Carrier of the growing fatty acid chain in fatty acid biosynthesis. This is Acyl carrier protein from Chlorobium phaeovibrioides (strain DSM 265 / 1930) (Prosthecochloris vibrioformis (strain DSM 265)).